The sequence spans 242 residues: Ribonuclease 3 (242 aa).

The RNase III domain occupies 10–146; it reads LQNFNKKFAD…FVGALYLDQG (137 aa). Position 59 (Glu59) interacts with Mg(2+). Asp63 is an active-site residue. Positions 132 and 135 each coordinate Mg(2+). Glu135 is a catalytic residue. Residues 172-241 enclose the DRBM domain; it reads DFKTQFQELI…AEKAYNDMKK (70 aa). The interval 216–242 is disordered; the sequence is VAKGQGRTKKESEQKAAEKAYNDMKKK. Residues 223–242 show a composition bias toward basic and acidic residues; it reads TKKESEQKAAEKAYNDMKKK.

The protein belongs to the ribonuclease III family. Homodimer. The cofactor is Mg(2+).

It is found in the cytoplasm. It carries out the reaction Endonucleolytic cleavage to 5'-phosphomonoester.. Its function is as follows. Digests double-stranded RNA. Involved in the processing of primary rRNA transcript to yield the immediate precursors to the large and small rRNAs (23S and 16S). Processes some mRNAs, and tRNAs when they are encoded in the rRNA operon. Processes pre-crRNA and tracrRNA of type II CRISPR loci if present in the organism. The protein is Ribonuclease 3 of Staphylococcus carnosus (strain TM300).